The chain runs to 439 residues: Glutamine synthetase (439 aa).

The GS beta-grasp domain occupies Ser12–Lys93. The GS catalytic domain occupies Pro99 to Leu439. Mg(2+)-binding residues include Glu122 and Glu124. An ATP-binding site is contributed by Glu172. Glu177 and Glu184 together coordinate Mg(2+). Gly229 provides a ligand contact to L-glutamate. Mg(2+) is bound at residue His233. ATP-binding positions include His235–Ser237 and Ser237. L-glutamate is bound by residues Arg283, Glu289, and Arg301. Positions 301, 306, and 313 each coordinate ATP. Mg(2+) is bound at residue Glu318. Arg320 contacts L-glutamate.

It belongs to the glutamine synthetase family. Oligomer of 12 subunits arranged in the form of two hexagons. The cofactor is Mg(2+).

It is found in the cytoplasm. The enzyme catalyses L-glutamate + NH4(+) + ATP = L-glutamine + ADP + phosphate + H(+). Its function is as follows. Probably involved in nitrogen metabolism via ammonium assimilation. Catalyzes the ATP-dependent biosynthesis of glutamine from glutamate and ammonia. The chain is Glutamine synthetase from Pyrococcus woesei.